The following is a 233-amino-acid chain: MTNPLSDASSRVGSGLRIGVLALQGDFREHIHAVEAAGATGVGIRRPSELDDIDGLIIPGGESTTIDKLSRIFEVRDPLQKRIAEGLPVYGSCAGMILLADEIADPATDLDGNPQQTFGGLDITVRRNAFGRQRESFETDLDFKGLDFSAGESGVDPVHAVFIRGPWVERVGSGVEVLAQVDPDHASHTATLHGVARIVAVRSGQLLATSFHPEVTGEKRVHELFIRMIRGEA.

61–63 (GES) is a binding site for L-glutamine. The Nucleophile role is filled by Cys93. Residues Arg127 and 163 to 164 (IR) contribute to the L-glutamine site. Catalysis depends on charge relay system residues His212 and Glu214.

It belongs to the glutaminase PdxT/SNO family. In terms of assembly, in the presence of PdxS, forms a dodecamer of heterodimers. Only shows activity in the heterodimer.

The enzyme catalyses aldehydo-D-ribose 5-phosphate + D-glyceraldehyde 3-phosphate + L-glutamine = pyridoxal 5'-phosphate + L-glutamate + phosphate + 3 H2O + H(+). The catalysed reaction is L-glutamine + H2O = L-glutamate + NH4(+). It functions in the pathway cofactor biosynthesis; pyridoxal 5'-phosphate biosynthesis. In terms of biological role, catalyzes the hydrolysis of glutamine to glutamate and ammonia as part of the biosynthesis of pyridoxal 5'-phosphate. The resulting ammonia molecule is channeled to the active site of PdxS. This Paenarthrobacter aurescens (strain TC1) protein is Pyridoxal 5'-phosphate synthase subunit PdxT.